The primary structure comprises 260 residues: 2-amino-5-formylamino-6-ribosylaminopyrimidin-4(3H)-one 5'-monophosphate deformylase (260 aa).

4 residues coordinate Fe cation: glutamate 33, histidine 35, aspartate 44, and histidine 112.

The protein belongs to the creatininase superfamily. FAPy deformylase family. As to quaternary structure, homodimer. The cofactor is Fe(2+). Zn(2+) serves as cofactor.

It catalyses the reaction 2-amino-5-formylamino-6-(5-phospho-D-ribosylamino)pyrimidin-4(3H)-one + H2O = 2,5-diamino-6-(1-D-ribosylamino)pyrimidin-4(3H)-one 5'-phosphate + formate + H(+). The protein operates within cofactor biosynthesis; coenzyme F420 biosynthesis. It participates in cofactor biosynthesis; riboflavin biosynthesis. Catalyzes the hydrolysis of the formamide of 2-amino-5-formylamino-6-ribosylamino-4(3H)-pyrimidinone 5'-monophosphate (FAPy) to form 2,5-diamino-6-ribosylamino-4(3H)-pyrimidinone 5'-phosphate (APy). The sequence is that of 2-amino-5-formylamino-6-ribosylaminopyrimidin-4(3H)-one 5'-monophosphate deformylase from Methanococcus voltae (strain ATCC BAA-1334 / A3).